A 496-amino-acid polypeptide reads, in one-letter code: MERYILSLDQGTTSSRAILFNKNGEIVHIAQREFKQYFPKPGWVEHNANEIWGSILAVIATVLSEASVQPEQVAAIGITNQRETTVVWDKHTGLPIYNAIVWQSRQTADICEQLKQQGYDELFRKKTGLLIDPYFSGTKVKWILDNVEGAREKAEKGDLLFGTIDTWLIWKLSGGRAHVTDYSNASRTLLFNIHTLQWDDEILNILGIPKSMLPKVRPSSEVYAKTIPHHFFGVEVPIAGAAGDQQAALFGQACFEEGMAKNTYGTGCFMLMNTGEKAVQSKHGLLTTIAWGIDGKVEYALEGSIFVAGSAVQWLRDGLRMIKKASDSETYAEKVDSTDGVYVVPAFVGLGTPYWDSDVRGAVFGLTRGTTKEHFIRATLESLAYQTKDVLAAMEADSGIALKTLRVDGGAVKNNFLMQFQSDMLGVPVERPVINETTALGAAYLAGLAVGYWKDRKEIASQWQLERQFEPQMAKEKQEQLYAGWKKAVKAAMAFK.

ADP is bound at residue T12. ATP contacts are provided by T12, T13, and S14. T12 serves as a coordination point for sn-glycerol 3-phosphate. R16 contributes to the ADP binding site. The sn-glycerol 3-phosphate site is built by R82, E83, and Y134. R82, E83, and Y134 together coordinate glycerol. At H230 the chain carries Phosphohistidine; by HPr. D244 is a binding site for sn-glycerol 3-phosphate. Glycerol-binding residues include D244 and Q245. ADP is bound by residues T266 and G309. ATP contacts are provided by T266, G309, Q313, and G410. ADP contacts are provided by G410 and N414.

It belongs to the FGGY kinase family. Homotetramer and homodimer (in equilibrium). In terms of processing, the phosphoenolpyruvate-dependent sugar phosphotransferase system (PTS), including enzyme I, and histidine-containing protein (HPr) are required for the phosphorylation, which leads to the activation of the enzyme.

The enzyme catalyses glycerol + ATP = sn-glycerol 3-phosphate + ADP + H(+). It participates in polyol metabolism; glycerol degradation via glycerol kinase pathway; sn-glycerol 3-phosphate from glycerol: step 1/1. With respect to regulation, activated by phosphorylation and inhibited by fructose 1,6-bisphosphate (FBP). In terms of biological role, key enzyme in the regulation of glycerol uptake and metabolism. Catalyzes the phosphorylation of glycerol to yield sn-glycerol 3-phosphate. The sequence is that of Glycerol kinase from Geobacillus sp. (strain WCH70).